We begin with the raw amino-acid sequence, 126 residues long: Small ribosomal subunit protein uS12 (126 aa).

Residue Asp-89 is modified to 3-methylthioaspartic acid.

This sequence belongs to the universal ribosomal protein uS12 family. Part of the 30S ribosomal subunit. Contacts proteins S8 and S17. May interact with IF1 in the 30S initiation complex.

Functionally, with S4 and S5 plays an important role in translational accuracy. In terms of biological role, interacts with and stabilizes bases of the 16S rRNA that are involved in tRNA selection in the A site and with the mRNA backbone. Located at the interface of the 30S and 50S subunits, it traverses the body of the 30S subunit contacting proteins on the other side and probably holding the rRNA structure together. The combined cluster of proteins S8, S12 and S17 appears to hold together the shoulder and platform of the 30S subunit. In Polynucleobacter asymbioticus (strain DSM 18221 / CIP 109841 / QLW-P1DMWA-1) (Polynucleobacter necessarius subsp. asymbioticus), this protein is Small ribosomal subunit protein uS12.